A 311-amino-acid polypeptide reads, in one-letter code: Malate dehydrogenase (311 aa).

Residues 7 to 13 and Asp-34 contribute to the NAD(+) site; that span reads GAAGGIG. Substrate-binding residues include Arg-81 and Arg-87. NAD(+)-binding positions include Asn-94 and 117-119; that span reads ITN. Substrate is bound by residues Asn-119 and Arg-153. His-177 acts as the Proton acceptor in catalysis. Met-227 provides a ligand contact to NAD(+).

Belongs to the LDH/MDH superfamily. MDH type 1 family. Homodimer.

It carries out the reaction (S)-malate + NAD(+) = oxaloacetate + NADH + H(+). Functionally, catalyzes the reversible oxidation of malate to oxaloacetate. This is Malate dehydrogenase from Erwinia tasmaniensis (strain DSM 17950 / CFBP 7177 / CIP 109463 / NCPPB 4357 / Et1/99).